The chain runs to 361 residues: Peptide chain release factor 1 (361 aa).

N5-methylglutamine is present on Q235. A disordered region spans residues 284–306 (SQQATAEAMTRKLQVGSGDRSQR).

Belongs to the prokaryotic/mitochondrial release factor family. Post-translationally, methylated by PrmC. Methylation increases the termination efficiency of RF1.

It is found in the cytoplasm. In terms of biological role, peptide chain release factor 1 directs the termination of translation in response to the peptide chain termination codons UAG and UAA. The protein is Peptide chain release factor 1 of Xylella fastidiosa (strain 9a5c).